The sequence spans 89 residues: uncharacterized protein (89 aa).

Positions 1–19 are cleaved as a signal peptide; the sequence is MIVRTLLIAAALLGGTAQA.

The protein resides in the secreted. This is an uncharacterized protein from Pseudomonas aeruginosa (strain UCBPP-PA14).